A 583-amino-acid polypeptide reads, in one-letter code: Aspartate--tRNA ligase (583 aa).

Residue Glu-174 coordinates L-aspartate. The aspartate stretch occupies residues 198–201 (QITK). An L-aspartate-binding site is contributed by Arg-220. ATP is bound by residues 220-222 (RDE) and Gln-229. His-443 serves as a coordination point for L-aspartate. Glu-477 is an ATP binding site. Arg-484 contacts L-aspartate. 529–532 (GLDR) lines the ATP pocket.

Belongs to the class-II aminoacyl-tRNA synthetase family. Type 1 subfamily. In terms of assembly, homodimer.

The protein localises to the cytoplasm. It catalyses the reaction tRNA(Asp) + L-aspartate + ATP = L-aspartyl-tRNA(Asp) + AMP + diphosphate. Functionally, catalyzes the attachment of L-aspartate to tRNA(Asp) in a two-step reaction: L-aspartate is first activated by ATP to form Asp-AMP and then transferred to the acceptor end of tRNA(Asp). This is Aspartate--tRNA ligase from Streptococcus agalactiae serotype Ia (strain ATCC 27591 / A909 / CDC SS700).